Reading from the N-terminus, the 314-residue chain is Homoserine kinase (314 aa).

96–106 (PIGSGLGSSAC) provides a ligand contact to ATP.

The protein belongs to the GHMP kinase family. Homoserine kinase subfamily.

The protein localises to the cytoplasm. The enzyme catalyses L-homoserine + ATP = O-phospho-L-homoserine + ADP + H(+). Its pathway is amino-acid biosynthesis; L-threonine biosynthesis; L-threonine from L-aspartate: step 4/5. Functionally, catalyzes the ATP-dependent phosphorylation of L-homoserine to L-homoserine phosphate. The protein is Homoserine kinase of Histophilus somni (strain 129Pt) (Haemophilus somnus).